We begin with the raw amino-acid sequence, 288 residues long: Serine/threonine-protein kinase pef1 (288 aa).

The Protein kinase domain occupies 3 to 285 (YQRLEKLGEG…GQDALQHAWF (283 aa)). ATP contacts are provided by residues 9–17 (LGEGTYAHV) and lysine 32. Threonine 13 bears the Phosphothreonine mark. Tyrosine 14 is subject to Phosphotyrosine. Catalysis depends on aspartate 126, which acts as the Proton acceptor.

It belongs to the protein kinase superfamily. CMGC Ser/Thr protein kinase family. CDC2/CDKX subfamily. Interacts with the pas1 cyclin.

The catalysed reaction is L-seryl-[protein] + ATP = O-phospho-L-seryl-[protein] + ADP + H(+). It catalyses the reaction L-threonyl-[protein] + ATP = O-phospho-L-threonyl-[protein] + ADP + H(+). This Schizosaccharomyces pombe (strain 972 / ATCC 24843) (Fission yeast) protein is Serine/threonine-protein kinase pef1 (pef1).